A 223-amino-acid polypeptide reads, in one-letter code: UPF0758 protein Tgr7_0100 (223 aa).

The MPN domain maps to 102 to 223 (ALTSPDDTRR…LVSFAERGLL (122 aa)). Positions 173, 175, and 186 each coordinate Zn(2+). The JAMM motif signature appears at 173–186 (HNHPSGVAEPSRSD).

It belongs to the UPF0758 family.

This chain is UPF0758 protein Tgr7_0100, found in Thioalkalivibrio sulfidiphilus (strain HL-EbGR7).